The following is a 92-amino-acid chain: DNA-directed RNA polymerase subunit omega (92 aa).

Belongs to the RNA polymerase subunit omega family. In terms of assembly, the RNAP catalytic core consists of 2 alpha, 1 beta, 1 beta' and 1 omega subunit. When a sigma factor is associated with the core the holoenzyme is formed, which can initiate transcription.

The catalysed reaction is RNA(n) + a ribonucleoside 5'-triphosphate = RNA(n+1) + diphosphate. Functionally, promotes RNA polymerase assembly. Latches the N- and C-terminal regions of the beta' subunit thereby facilitating its interaction with the beta and alpha subunits. The sequence is that of DNA-directed RNA polymerase subunit omega from Shewanella denitrificans (strain OS217 / ATCC BAA-1090 / DSM 15013).